The following is a 368-amino-acid chain: Ubiquitin domain-containing protein UBFD1 (368 aa).

A disordered region spans residues 106–139 (SCDARGNLQPAPAQPPGDPAAQASVSNGEDAGGG). The Ubiquitin-like domain maps to 143-218 (ELVDLKIIWN…IMVVGSTIND (76 aa)). The tract at residues 231-263 (QDAKAEENKKEPLCRQKQHRKVLDKGKPEDVMP) is disordered. Basic and acidic residues-rich tracts occupy residues 233–244 (AKAEENKKEPLC) and 251–260 (KVLDKGKPED).

In Mus musculus (Mouse), this protein is Ubiquitin domain-containing protein UBFD1 (Ubfd1).